The primary structure comprises 228 residues: Aspartyl protease inhibitor (228 aa).

The N-terminal stretch at 1 to 15 (MKLIELCVLCAIAFA) is a signal peptide. Over residues 88–112 (KLKSRMSGKKEEKAAVTSTKDEDLP) the composition is skewed to basic and acidic residues. The tract at residues 88 to 119 (KLKSRMSGKKEEKAAVTSTKDEDLPKPPQKPS) is disordered. An intrachain disulfide couples Cys134 to Cys224.

It belongs to the protease inhibitor I33 family.

It localises to the secreted. Functionally, aspartyl protease inhibitor. The sequence is that of Aspartyl protease inhibitor from Trichostrongylus colubriformis (Black scour worm).